A 219-amino-acid polypeptide reads, in one-letter code: MAAEDREMMEARGAGESCPTFPKMVPGDSKSEGKPRAYLEAESQKPDSSYDYLEEMEACEDGGCQGPLKSLSPKSCRATKGQAGDGPKPAELPPTPGTERNPEMELEKVRMEFELTRLKYLHEKNQRQRQHEVVMEQLQRERQHEVVMEQLQQEAAPRLFSGGLQNFLLPQNQFAMFLYCFIFIHIIYVTKEMVFFLFAKHYLFCIAAILLCLIKTFWS.

Basic and acidic residues-rich tracts occupy residues 1–10 and 29–45; these read MAAEDREMME and SKSEGKPRAYLEAESQK. Residues 1 to 101 are disordered; that stretch reads MAAEDREMME…LPPTPGTERN (101 aa). Positions 121–156 form a coiled coil; that stretch reads LHEKNQRQRQHEVVMEQLQRERQHEVVMEQLQQEAA. 2 helical membrane passes run 167-187 and 194-214; these read FLLPQNQFAMFLYCFIFIHII and VFFLFAKHYLFCIAAILLCLI.

The protein resides in the membrane. In Homo sapiens (Human), this protein is Transmembrane protein 247 (TMEM247).